Reading from the N-terminus, the 168-residue chain is ATP synthase subunit b (168 aa).

The helical transmembrane segment at Trp13–Leu33 threads the bilayer.

The protein belongs to the ATPase B chain family. F-type ATPases have 2 components, F(1) - the catalytic core - and F(0) - the membrane proton channel. F(1) has five subunits: alpha(3), beta(3), gamma(1), delta(1), epsilon(1). F(0) has three main subunits: a(1), b(2) and c(10-14). The alpha and beta chains form an alternating ring which encloses part of the gamma chain. F(1) is attached to F(0) by a central stalk formed by the gamma and epsilon chains, while a peripheral stalk is formed by the delta and b chains.

Its subcellular location is the cell membrane. In terms of biological role, f(1)F(0) ATP synthase produces ATP from ADP in the presence of a proton or sodium gradient. F-type ATPases consist of two structural domains, F(1) containing the extramembraneous catalytic core and F(0) containing the membrane proton channel, linked together by a central stalk and a peripheral stalk. During catalysis, ATP synthesis in the catalytic domain of F(1) is coupled via a rotary mechanism of the central stalk subunits to proton translocation. Functionally, component of the F(0) channel, it forms part of the peripheral stalk, linking F(1) to F(0). The polypeptide is ATP synthase subunit b (Moorella thermoacetica (strain ATCC 39073 / JCM 9320)).